The sequence spans 145 residues: Large ribosomal subunit protein uL13 (145 aa).

It belongs to the universal ribosomal protein uL13 family. As to quaternary structure, part of the 50S ribosomal subunit.

Functionally, this protein is one of the early assembly proteins of the 50S ribosomal subunit, although it is not seen to bind rRNA by itself. It is important during the early stages of 50S assembly. The polypeptide is Large ribosomal subunit protein uL13 (Bacillus velezensis (strain DSM 23117 / BGSC 10A6 / LMG 26770 / FZB42) (Bacillus amyloliquefaciens subsp. plantarum)).